A 385-amino-acid chain; its full sequence is Mannitol-1-phosphate 5-dehydrogenase (385 aa).

Residue 3–14 (AVHFGAGNIGRG) participates in NAD(+) binding.

This sequence belongs to the mannitol dehydrogenase family.

The catalysed reaction is D-mannitol 1-phosphate + NAD(+) = beta-D-fructose 6-phosphate + NADH + H(+). The sequence is that of Mannitol-1-phosphate 5-dehydrogenase from Geobacillus thermodenitrificans (strain NG80-2).